A 416-amino-acid polypeptide reads, in one-letter code: Histidinol dehydrogenase (416 aa).

NAD(+)-binding residues include Tyr-117, Gln-178, and Asn-201. Residues Thr-224, Gln-246, and His-249 each contribute to the substrate site. Zn(2+)-binding residues include Gln-246 and His-249. Catalysis depends on proton acceptor residues Glu-314 and His-315. His-315, Asp-348, Glu-402, and His-407 together coordinate substrate. Zn(2+) is bound at residue Asp-348. Residue His-407 coordinates Zn(2+).

Belongs to the histidinol dehydrogenase family. Zn(2+) serves as cofactor.

The enzyme catalyses L-histidinol + 2 NAD(+) + H2O = L-histidine + 2 NADH + 3 H(+). The protein operates within amino-acid biosynthesis; L-histidine biosynthesis; L-histidine from 5-phospho-alpha-D-ribose 1-diphosphate: step 9/9. Its function is as follows. Catalyzes the sequential NAD-dependent oxidations of L-histidinol to L-histidinaldehyde and then to L-histidine. The polypeptide is Histidinol dehydrogenase (Staphylococcus aureus (strain Mu50 / ATCC 700699)).